The chain runs to 127 residues: Thioredoxin-3, mitochondrial (127 aa).

Residues 1-21 constitute a mitochondrion transit peptide; the sequence is MLFYKPVMRMAVRPLKSIRFQ. Positions 22–127 constitute a Thioredoxin domain; sequence SSYTSITKLT…TALEKGIKDL (106 aa). Residues Cys55 and Cys58 each act as nucleophile in the active site. Cys55 and Cys58 are disulfide-bonded.

Belongs to the thioredoxin family.

Its subcellular location is the mitochondrion. In Saccharomyces cerevisiae (strain ATCC 204508 / S288c) (Baker's yeast), this protein is Thioredoxin-3, mitochondrial (TRX3).